The primary structure comprises 281 residues: Diaminopimelate epimerase (281 aa).

Positions 13 and 66 each coordinate substrate. C75 serves as the catalytic Proton donor. Substrate contacts are provided by residues 76–77, N164, N197, and 215–216; these read GN and ER. C224 serves as the catalytic Proton acceptor. 225–226 contributes to the substrate binding site; sequence GT.

This sequence belongs to the diaminopimelate epimerase family. In terms of assembly, homodimer.

The protein localises to the cytoplasm. It carries out the reaction (2S,6S)-2,6-diaminopimelate = meso-2,6-diaminopimelate. It functions in the pathway amino-acid biosynthesis; L-lysine biosynthesis via DAP pathway; DL-2,6-diaminopimelate from LL-2,6-diaminopimelate: step 1/1. Catalyzes the stereoinversion of LL-2,6-diaminopimelate (L,L-DAP) to meso-diaminopimelate (meso-DAP), a precursor of L-lysine and an essential component of the bacterial peptidoglycan. The sequence is that of Diaminopimelate epimerase from Microcystis aeruginosa (strain NIES-843 / IAM M-2473).